Reading from the N-terminus, the 137-residue chain is Nucleoside diphosphate kinase (137 aa).

ATP is bound by residues K9, F57, R85, T91, and R102. H119 functions as the Pros-phosphohistidine intermediate in the catalytic mechanism.

The protein belongs to the NDK family. As to quaternary structure, homotetramer. Mg(2+) is required as a cofactor.

The protein localises to the cytoplasm. The catalysed reaction is a 2'-deoxyribonucleoside 5'-diphosphate + ATP = a 2'-deoxyribonucleoside 5'-triphosphate + ADP. It catalyses the reaction a ribonucleoside 5'-diphosphate + ATP = a ribonucleoside 5'-triphosphate + ADP. Major role in the synthesis of nucleoside triphosphates other than ATP. The ATP gamma phosphate is transferred to the NDP beta phosphate via a ping-pong mechanism, using a phosphorylated active-site intermediate. This chain is Nucleoside diphosphate kinase, found in Streptococcus thermophilus (strain CNRZ 1066).